Here is a 359-residue protein sequence, read N- to C-terminus: 3-dehydroquinate synthase (359 aa).

Residues 106 to 110 (GVVGD), 130 to 131 (TT), K143, K152, and 170 to 173 (TLQT) contribute to the NAD(+) site. Zn(2+) is bound by residues E185, H248, and H265.

It belongs to the sugar phosphate cyclases superfamily. Dehydroquinate synthase family. The cofactor is Co(2+). Requires Zn(2+) as cofactor. NAD(+) is required as a cofactor.

Its subcellular location is the cytoplasm. The catalysed reaction is 7-phospho-2-dehydro-3-deoxy-D-arabino-heptonate = 3-dehydroquinate + phosphate. Its pathway is metabolic intermediate biosynthesis; chorismate biosynthesis; chorismate from D-erythrose 4-phosphate and phosphoenolpyruvate: step 2/7. Catalyzes the conversion of 3-deoxy-D-arabino-heptulosonate 7-phosphate (DAHP) to dehydroquinate (DHQ). In Desulforamulus reducens (strain ATCC BAA-1160 / DSM 100696 / MI-1) (Desulfotomaculum reducens), this protein is 3-dehydroquinate synthase.